The chain runs to 89 residues: Small ribosomal subunit protein uS14 (89 aa).

Belongs to the universal ribosomal protein uS14 family. In terms of assembly, part of the 30S ribosomal subunit. Contacts proteins S3 and S10.

In terms of biological role, binds 16S rRNA, required for the assembly of 30S particles and may also be responsible for determining the conformation of the 16S rRNA at the A site. The sequence is that of Small ribosomal subunit protein uS14 from Parabacteroides distasonis (strain ATCC 8503 / DSM 20701 / CIP 104284 / JCM 5825 / NCTC 11152).